Reading from the N-terminus, the 503-residue chain is MAADQGTFTTSVTLSPVEGSRTGGILPRRAFRRSCDRCHAQKIKCTGNKEVTARAPCQRCQQAGLRCVYSERCPKRKLRPSRAADLVSADPDPCLHMSSPPVPSQSLPLDVSESHSSNTSRQFLDPPDSYDWSWTSIGTDEAIDTDCWGLSQCDGGFSCQLEPTLPDLPSPFESTVEKAPLPPVSSDIARAASAQRELFDDLSAVSQELEAILLAVTVEWPKQEIWTRASPHSPTAFPERITQRRHNMWANWLTDLHVFSLDPIGMFFNASRRLLTVLRQQAHADCHQGTLDECLRTKNLFTAVHCYILNVRILTSISELLLSQIRRTQNSHMNPWEGSRSESPSRDDTSSTSGHSSVDTIPDFSEDLPIGELFSYVDPLTHALFSACTTLHVGVQLLRENEITLGVHSAQGIAASISMSGGPGEDIARTGATNSARCEEQPTTPAARVLFMFLSDEGASQEVKSAGSRGRTIAALRRCYEDIFSLARKHKYGMLRDLNNIPP.

Residues 1–14 (MAADQGTFTTSVTL) are compositionally biased toward polar residues. A disordered region spans residues 1–21 (MAADQGTFTTSVTLSPVEGSR). Residues 35–67 (CDRCHAQKIKCTGNKEVTARAPCQRCQQAGLRC) constitute a DNA-binding region (zn(2)-C6 fungal-type). 2 disordered regions span residues 89 to 124 (ADPDPCLHMSSPPVPSQSLPLDVSESHSSNTSRQFL) and 331 to 362 (SHMNPWEGSRSESPSRDDTSSTSGHSSVDTIP). The span at 339–349 (SRSESPSRDDT) shows a compositional bias: basic and acidic residues. The segment covering 350 to 359 (SSTSGHSSVD) has biased composition (polar residues).

It is found in the nucleus. Its function is as follows. Transcription factor that regulates the expression of the he gene cluster that mediates the biosynthesis of lovastatin (also known as mevinolin, mevacor or monacolin K), a hypolipidemic inhibitor of (3S)-hydroxymethylglutaryl-coenzyme A (HMG-CoA) reductase (HMGR). In Aspergillus terreus (strain NIH 2624 / FGSC A1156), this protein is Transcriptional regulator LovE.